A 398-amino-acid chain; its full sequence is MSGVETVGVHADAHRDSWQVRAQKQITYEVRFRDDVFGLDSTDLLEAGADGAGSRRRFVVVDSAVDALYGSRIREYFTHHGIDHSILVMRVGETVKDFDTAGRIVAAMDAFGLARRREPMIVVGGGVLMDVAGLVASLYRRGTPFLRVPTTLVGLIDAGVGAKTGVNFNGHKNRLGTYAPADLTLLDRRFLATLDRRHLSNGLAEMLKIALIKDAELFQLLERHGRVLIEERFQGRTGTGDRAAVRALRAATHGMLEELGPNLWESRLERSVDYGHTFSPTIEMRALPALLHGEAVCVDMALTTVLAYRRGLLDVAQRDRIFAVMTALGLPTWHPLLTPEVLEAALQDTVRHRDGWQRLPLPVGIGGVTFVNDVTAAELQAAALMQHRLAEDALLLRA.

NAD(+) is bound by residues aspartate 62, 93–96 (ETVK), 126–130 (GVLMD), 150–151 (TT), lysine 163, lysine 172, and 190–193 (FLAT). Residue lysine 163 is part of the active site. Positions 205, 276, and 292 each coordinate a divalent metal cation.

This sequence belongs to the sugar phosphate cyclases superfamily. EEVS family. NAD(+) is required as a cofactor. It depends on Co(2+) as a cofactor.

It catalyses the reaction D-sedoheptulose 7-phosphate = 2-epi-5-epi-valiolone + phosphate. In terms of biological role, catalyzes the cyclization of D-sedoheptulose 7-phosphate to 2-epi-5-epi-valiolone. Does not use ido-heptulose 7-phosphate and 3-deoxy-arabino-heptulosonate 7-phosphate. Involved in the biosynthesis of the acarviose moiety of the alpha-glucosidase inhibitor acarbose. The sequence is that of 2-epi-5-epi-valiolone synthase from Actinoplanes sp. (strain ATCC 31044 / CBS 674.73 / SE50/110).